A 369-amino-acid chain; its full sequence is Protein-glutamate methylesterase/protein-glutamine glutaminase of group 3 operon (369 aa).

Residues 11-128 enclose the Response regulatory domain; the sequence is RVLIVDDSAA…DLERQEASIR (118 aa). Asp-62 is subject to 4-aspartylphosphate. Residues 136–168 form a disordered region; sequence ATETTRRRSQPEPRPLAPGPKLTADEILPARPP. Residues 170–358 enclose the CheB-type methylesterase domain; it reads PVPETMPVVC…LDRLAARIME (189 aa). Residues Ser-183, His-209, and Asp-305 contribute to the active site.

It belongs to the CheB family. Post-translationally, phosphorylated in vitro by CheA2, but not by CheA1. Phosphorylation of the N-terminal regulatory domain activates the methylesterase activity.

It is found in the cytoplasm. It catalyses the reaction [protein]-L-glutamate 5-O-methyl ester + H2O = L-glutamyl-[protein] + methanol + H(+). The enzyme catalyses L-glutaminyl-[protein] + H2O = L-glutamyl-[protein] + NH4(+). Its function is as follows. Involved in chemotaxis. Part of a chemotaxis signal transduction system that modulates chemotaxis in response to various stimuli. Catalyzes the demethylation of specific methylglutamate residues introduced into the chemoreceptors (methyl-accepting chemotaxis proteins or MCP) by CheR. Also mediates the irreversible deamidation of specific glutamine residues to glutamic acid. The chain is Protein-glutamate methylesterase/protein-glutamine glutaminase of group 3 operon (cheB3) from Cereibacter sphaeroides (Rhodobacter sphaeroides).